A 313-amino-acid chain; its full sequence is Dimethyladenosine transferase (313 aa).

A disordered region spans residues 1-21 (MPKVKSGAIGRRRGRQEQRRE). His37, Leu39, Gly64, Glu85, Asp113, and Asn128 together coordinate S-adenosyl-L-methionine.

It belongs to the class I-like SAM-binding methyltransferase superfamily. rRNA adenine N(6)-methyltransferase family. As to quaternary structure, part of the small subunit (SSU) processome, composed of more than 70 proteins and the RNA chaperone small nucleolar RNA (snoRNA) U3.

It is found in the nucleus. The protein localises to the nucleoplasm. Its subcellular location is the nucleolus. It catalyses the reaction adenosine(1779)/adenosine(1780) in 18S rRNA + 4 S-adenosyl-L-methionine = N(6)-dimethyladenosine(1779)/N(6)-dimethyladenosine(1780) in 18S rRNA + 4 S-adenosyl-L-homocysteine + 4 H(+). Its function is as follows. Specifically dimethylates two adjacent adenosines in the loop of a conserved hairpin near the 3'-end of 18S rRNA in the 40S particle. Involved in the pre-rRNA processing steps leading to small-subunit rRNA production independently of its RNA-modifying catalytic activity. Part of the small subunit (SSU) processome, first precursor of the small eukaryotic ribosomal subunit. During the assembly of the SSU processome in the nucleolus, many ribosome biogenesis factors, an RNA chaperone and ribosomal proteins associate with the nascent pre-rRNA and work in concert to generate RNA folding, modifications, rearrangements and cleavage as well as targeted degradation of pre-ribosomal RNA by the RNA exosome. The sequence is that of Dimethyladenosine transferase (DIMT1) from Macaca fascicularis (Crab-eating macaque).